Here is a 247-residue protein sequence, read N- to C-terminus: Probable transcriptional regulatory protein ABO_0750 (247 aa).

This sequence belongs to the TACO1 family.

Its subcellular location is the cytoplasm. This chain is Probable transcriptional regulatory protein ABO_0750, found in Alcanivorax borkumensis (strain ATCC 700651 / DSM 11573 / NCIMB 13689 / SK2).